A 137-amino-acid chain; its full sequence is Protein E6 (137 aa).

2 zinc fingers span residues 17-53 and 90-127; these read CVWCREPLTEVDAFRCMIKDFHVVYRDGVKFGACTTC and CCYCGGKLTKNEKQRHVLYNEPFCKTRSNIIRGRCYDC.

It belongs to the papillomaviridae E6 protein family. As to quaternary structure, forms homodimers. Interacts with ubiquitin-protein ligase UBE3A/E6-AP; this interaction stimulates UBE3A ubiquitin activity. Interacts with host BAK1.

It localises to the host cytoplasm. The protein localises to the host nucleus. In terms of biological role, plays a major role in the induction and maintenance of cellular transformation. E6 associates with host UBE3A/E6-AP ubiquitin-protein ligase and modulates its activity. Protects host keratinocytes from apoptosis by mediating the degradation of host BAK1. May also inhibit host immune response. In Bos taurus (Bovine), this protein is Protein E6.